Reading from the N-terminus, the 400-residue chain is Queuine tRNA-ribosyltransferase catalytic subunit (400 aa).

Asp-89 acts as the Proton acceptor in catalysis. Residues 89–93, Asp-143, Gln-185, and Gly-212 each bind substrate; that span reads DSGGF. The segment at 243–249 is RNA binding; sequence GVGFPVD. Asp-262 serves as the catalytic Nucleophile. An RNA binding; important for wobble base 34 recognition region spans residues 267-271; that stretch reads TRTAR. The Zn(2+) site is built by Cys-301, Cys-303, Cys-306, and His-331.

Belongs to the queuine tRNA-ribosyltransferase family. In terms of assembly, heterodimer of a catalytic subunit and an accessory subunit. Zn(2+) is required as a cofactor.

The protein localises to the cytoplasm. It catalyses the reaction guanosine(34) in tRNA + queuine = queuosine(34) in tRNA + guanine. In terms of biological role, catalytic subunit of the queuine tRNA-ribosyltransferase (TGT) that catalyzes the base-exchange of a guanine (G) residue with queuine (Q) at position 34 (anticodon wobble position) in tRNAs with GU(N) anticodons (tRNA-Asp, -Asn, -His and -Tyr), resulting in the hypermodified nucleoside queuosine (7-(((4,5-cis-dihydroxy-2-cyclopenten-1-yl)amino)methyl)-7-deazaguanosine). Catalysis occurs through a double-displacement mechanism. The nucleophile active site attacks the C1' of nucleotide 34 to detach the guanine base from the RNA, forming a covalent enzyme-RNA intermediate. The proton acceptor active site deprotonates the incoming queuine, allowing a nucleophilic attack on the C1' of the ribose to form the product. The chain is Queuine tRNA-ribosyltransferase catalytic subunit from Caenorhabditis elegans.